The sequence spans 212 residues: Uracil phosphoribosyltransferase (212 aa).

5-phospho-alpha-D-ribose 1-diphosphate-binding positions include arginine 78, arginine 103, and 130 to 138; that span reads DPMLATGGS. Uracil contacts are provided by residues isoleucine 193 and 198-200; that span reads GDA. 5-phospho-alpha-D-ribose 1-diphosphate is bound at residue aspartate 199.

The protein belongs to the UPRTase family. The cofactor is Mg(2+).

It catalyses the reaction UMP + diphosphate = 5-phospho-alpha-D-ribose 1-diphosphate + uracil. Its pathway is pyrimidine metabolism; UMP biosynthesis via salvage pathway; UMP from uracil: step 1/1. With respect to regulation, allosterically activated by GTP. Catalyzes the conversion of uracil and 5-phospho-alpha-D-ribose 1-diphosphate (PRPP) to UMP and diphosphate. The sequence is that of Uracil phosphoribosyltransferase from Pseudomonas aeruginosa (strain LESB58).